The primary structure comprises 252 residues: Chitooligosaccharide deacetylase (252 aa).

Residues histidine 61 and histidine 125 each contribute to the Mg(2+) site.

This sequence belongs to the YdjC deacetylase family. ChbG subfamily. As to quaternary structure, homodimer. Mg(2+) is required as a cofactor.

The protein resides in the cytoplasm. It catalyses the reaction N,N'-diacetylchitobiose + H2O = N-acetyl-beta-D-glucosaminyl-(1-&gt;4)-D-glucosamine + acetate. The catalysed reaction is diacetylchitobiose-6'-phosphate + H2O = N'-monoacetylchitobiose-6'-phosphate + acetate. The protein operates within glycan degradation; chitin degradation. Functionally, involved in the degradation of chitin. ChbG is essential for growth on the acetylated chitooligosaccharides chitobiose and chitotriose but is dispensable for growth on cellobiose and chitosan dimer, the deacetylated form of chitobiose. Deacetylation of chitobiose-6-P and chitotriose-6-P is necessary for both the activation of the chb promoter by the regulatory protein ChbR and the hydrolysis of phosphorylated beta-glucosides by the phospho-beta-glucosidase ChbF. Catalyzes the removal of only one acetyl group from chitobiose-6-P to yield monoacetylchitobiose-6-P, the inducer of ChbR and the substrate of ChbF. This is Chitooligosaccharide deacetylase from Escherichia coli O8 (strain IAI1).